The chain runs to 167 residues: uncharacterized protein (167 aa).

Residues 1–13 (MQGDIRRKKDLLP) are compositionally biased toward basic and acidic residues. Disordered regions lie at residues 1-26 (MQGD…SRRR) and 67-167 (ESHS…ILDN). Over residues 71–80 (SDVSASASDH) the composition is skewed to low complexity. Over residues 102-156 (VPKEKFNNEVAKQQEVKNLENDLKPQIDSEKQKQINKDKKEQKQQLQKEKQDLAK) the composition is skewed to basic and acidic residues.

This is an uncharacterized protein from Saccharomyces cerevisiae (strain ATCC 204508 / S288c) (Baker's yeast).